The primary structure comprises 185 residues: Regulator of rDNA transcription protein 13 (185 aa).

WD repeat units follow at residues 9 to 48, 71 to 108, and 111 to 148; these read GHTD…NNGE, GHRA…LKHF, and HTQL…LVRS.

In terms of biological role, may be involved in the modulation of rDNA transcription. The protein is Regulator of rDNA transcription protein 13 (RRT13) of Saccharomyces cerevisiae (strain ATCC 204508 / S288c) (Baker's yeast).